A 266-amino-acid polypeptide reads, in one-letter code: DNA repair protein RecO (266 aa).

The protein belongs to the RecO family.

Functionally, involved in DNA repair and RecF pathway recombination. This chain is DNA repair protein RecO, found in Synechococcus elongatus (strain ATCC 33912 / PCC 7942 / FACHB-805) (Anacystis nidulans R2).